The sequence spans 978 residues: uncharacterized protein (978 aa).

An N-terminal signal peptide occupies residues 1–27 (MHSWKKKLVVSQLALACTLAITSQANA). The Autotransporter domain maps to 713–978 (GLADNGGAWV…SANVGVKYTW (266 aa)).

This is an uncharacterized protein from Salmonella typhimurium (strain LT2 / SGSC1412 / ATCC 700720).